The chain runs to 204 residues: Lipoprotein signal peptidase (204 aa).

The interval 1-42 (MAEAERIIGTPDIPDAAGEGQERPDADPEREQQEQEQAPERT) is disordered. Residues 20 to 42 (GQERPDADPEREQQEQEQAPERT) show a composition bias toward basic and acidic residues. Helical transmembrane passes span 50-70 (VLFA…MLVV), 100-120 (FGEA…VVIA), and 126-146 (LHSL…LGNL). Catalysis depends on residues aspartate 163 and aspartate 177. Residues 170-190 (FAVFNLADSAIVCGGILIVIL) traverse the membrane as a helical segment.

It belongs to the peptidase A8 family.

Its subcellular location is the cell membrane. It catalyses the reaction Release of signal peptides from bacterial membrane prolipoproteins. Hydrolyzes -Xaa-Yaa-Zaa-|-(S,diacylglyceryl)Cys-, in which Xaa is hydrophobic (preferably Leu), and Yaa (Ala or Ser) and Zaa (Gly or Ala) have small, neutral side chains.. It functions in the pathway protein modification; lipoprotein biosynthesis (signal peptide cleavage). Functionally, this protein specifically catalyzes the removal of signal peptides from prolipoproteins. The chain is Lipoprotein signal peptidase from Streptomyces coelicolor (strain ATCC BAA-471 / A3(2) / M145).